A 71-amino-acid polypeptide reads, in one-letter code: Translation initiation factor IF-1 (71 aa).

One can recognise an S1-like domain in the interval 1-71 (MAKQSAIEQD…LSKARITYRY (71 aa)).

It belongs to the IF-1 family. In terms of assembly, component of the 30S ribosomal translation pre-initiation complex which assembles on the 30S ribosome in the order IF-2 and IF-3, IF-1 and N-formylmethionyl-tRNA(fMet); mRNA recruitment can occur at any time during PIC assembly.

It localises to the cytoplasm. Functionally, one of the essential components for the initiation of protein synthesis. Stabilizes the binding of IF-2 and IF-3 on the 30S subunit to which N-formylmethionyl-tRNA(fMet) subsequently binds. Helps modulate mRNA selection, yielding the 30S pre-initiation complex (PIC). Upon addition of the 50S ribosomal subunit IF-1, IF-2 and IF-3 are released leaving the mature 70S translation initiation complex. This Flavobacterium johnsoniae (strain ATCC 17061 / DSM 2064 / JCM 8514 / BCRC 14874 / CCUG 350202 / NBRC 14942 / NCIMB 11054 / UW101) (Cytophaga johnsonae) protein is Translation initiation factor IF-1.